The primary structure comprises 858 residues: Neurofilament medium polypeptide (858 aa).

An N-acetylserine modification is found at serine 2. A head region spans residues 2 to 99 (SYTMEPLGNP…KLSRSNEKEQ (98 aa)). The tract at residues 22–57 (ATYSRASASPSSGFRSQSWSRGSGSTVSSSYKRTNL) is disordered. Positions 30–54 (SPSSGFRSQSWSRGSGSTVSSSYKR) are enriched in low complexity. O-linked (GlcNAc) threonine glycosylation is present at threonine 47. Positions 96–407 (EKEQLQGLND…KLLEGEETRF (312 aa)) constitute an IF rod domain. The segment at 100–131 (LQGLNDRFAGYIEKVHYLEQQNKEIEAELAAL) is coil 1A. The linker 1 stretch occupies residues 132 to 144 (RQKHAGRAQLGDA). Residues 145-243 (YEQELRELRG…EEEVAELLAQ (99 aa)) form a coil 1B region. Residues 244–260 (LQASHATVERKDYLKTD) are linker 12. The segment at 261–282 (LTTALKEIRAQLECQSDHNMHQ) is coil 2A. A linker 2 region spans residues 283–286 (AEEW). A coil 2B region spans residues 287-407 (FKCRYAKLTE…KLLEGEETRF (121 aa)). Residues 408-858 (SAFSGSITGP…SHAVVKEIKE (451 aa)) are tail. Threonine 427 is a glycosylation site (O-linked (GlcNAc) threonine). The interval 478-788 (AAKAQEEEQE…VVTNGLDVSP (311 aa)) is disordered. 2 stretches are compositionally biased toward acidic residues: residues 484 to 500 (EEQE…EEEA) and 509 to 524 (AAEE…EEEE). The span at 525 to 541 (AAKSDAAEEGGSKKEEI) shows a compositional bias: basic and acidic residues. The segment covering 542 to 555 (EEKEEGEEAEEEEA) has biased composition (acidic residues). A compositionally biased stretch (basic and acidic residues) spans 556–572 (EAKGKAEEAGAKVEKVK). The span at 576–586 (AKSPPKSPPKS) shows a compositional bias: pro residues. The span at 590–601 (EQAKAVQKAAAE) shows a compositional bias: low complexity. Over residues 602-623 (VGKDQKAEKAAEKAAKEEKAAS) the composition is skewed to basic and acidic residues. Over residues 624–637 (PEKPATPKVTSPEK) the composition is skewed to low complexity. 2 stretches are compositionally biased toward basic and acidic residues: residues 651–664 (ITPE…KPTT) and 675–727 (ASPE…KAVV). A compositionally biased stretch (low complexity) spans 728 to 743 (EESITVTKVTKVTAEV). A compositionally biased stretch (basic and acidic residues) spans 744–771 (EVSKEARKEDIAVNGEVEEKKDEAKEKE).

This sequence belongs to the intermediate filament family. In terms of processing, there are a number of repeats of the tripeptide K-S-P, NFM is phosphorylated on a number of the serines in this motif. It is thought that phosphorylation of NFM results in the formation of interfilament cross bridges that are important in the maintenance of axonal caliber. Phosphorylation seems to play a major role in the functioning of the larger neurofilament polypeptides (NF-M and NF-H), the levels of phosphorylation being altered developmentally and coincident with a change in the neurofilament function.

The protein resides in the cytoplasm. It is found in the cytoskeleton. It localises to the cell projection. The protein localises to the axon. Its function is as follows. Neurofilaments usually contain three intermediate filament proteins: NEFL, NEFM, and NEFH which are involved in the maintenance of neuronal caliber. May additionally cooperate with other neuronal intermediate filament proteins to form neuronal filamentous networks. This chain is Neurofilament medium polypeptide (NEFM), found in Gallus gallus (Chicken).